A 260-amino-acid chain; its full sequence is UPF0246 protein Bxeno_A1262 (260 aa).

It belongs to the UPF0246 family.

The polypeptide is UPF0246 protein Bxeno_A1262 (Paraburkholderia xenovorans (strain LB400)).